Consider the following 266-residue polypeptide: Aliphatic sulfonates import ATP-binding protein SsuB (266 aa).

The region spanning Leu-23–Leu-244 is the ABC transporter domain. Gly-55–Ser-62 is a binding site for ATP.

It belongs to the ABC transporter superfamily. Aliphatic sulfonates importer (TC 3.A.1.17.2) family. In terms of assembly, the complex is composed of two ATP-binding proteins (SsuB), two transmembrane proteins (SsuC) and a solute-binding protein (SsuA).

The protein resides in the cell inner membrane. It catalyses the reaction ATP + H2O + aliphatic sulfonate-[sulfonate-binding protein]Side 1 = ADP + phosphate + aliphatic sulfonateSide 2 + [sulfonate-binding protein]Side 1.. Its function is as follows. Part of the ABC transporter complex SsuABC involved in aliphatic sulfonates import. Responsible for energy coupling to the transport system. The sequence is that of Aliphatic sulfonates import ATP-binding protein SsuB from Pectobacterium atrosepticum (strain SCRI 1043 / ATCC BAA-672) (Erwinia carotovora subsp. atroseptica).